A 196-amino-acid chain; its full sequence is Pyridoxal 5'-phosphate synthase subunit PdxT (196 aa).

An L-glutamine-binding site is contributed by 47 to 49; that stretch reads GES. The Nucleophile role is filled by Cys79. Residues Arg106 and 134–135 each bind L-glutamine; that span reads IR. Active-site charge relay system residues include His170 and Glu172.

It belongs to the glutaminase PdxT/SNO family. In terms of assembly, in the presence of PdxS, forms a dodecamer of heterodimers. Only shows activity in the heterodimer.

It carries out the reaction aldehydo-D-ribose 5-phosphate + D-glyceraldehyde 3-phosphate + L-glutamine = pyridoxal 5'-phosphate + L-glutamate + phosphate + 3 H2O + H(+). The catalysed reaction is L-glutamine + H2O = L-glutamate + NH4(+). Its pathway is cofactor biosynthesis; pyridoxal 5'-phosphate biosynthesis. Catalyzes the hydrolysis of glutamine to glutamate and ammonia as part of the biosynthesis of pyridoxal 5'-phosphate. The resulting ammonia molecule is channeled to the active site of PdxS. The chain is Pyridoxal 5'-phosphate synthase subunit PdxT from Bacillus cereus (strain ZK / E33L).